The primary structure comprises 135 residues: Large ribosomal subunit protein uL16c (135 aa).

The span at 1–17 (MLSPKRTRFRKQHRGRM) shows a compositional bias: basic residues. The tract at residues 1–20 (MLSPKRTRFRKQHRGRMKGT) is disordered.

The protein belongs to the universal ribosomal protein uL16 family. Part of the 50S ribosomal subunit.

It is found in the plastid. The protein localises to the chloroplast. This Lemna minor (Common duckweed) protein is Large ribosomal subunit protein uL16c.